Consider the following 1921-residue polypeptide: Disks large homolog 5 (1921 aa).

One can recognise a CARD domain in the interval 1–90 (MEPQRRELLA…HLLPILYLNG (90 aa)). Residues 116–143 (ESSSSLSSVGTTGKAPSPPPLLTEQQAN) are disordered. Residues 139–601 (EQQANDTVEN…KEARFRQLMA (463 aa)) adopt a coiled-coil conformation. A phosphoserine mark is found at S264 and S295. 2 consecutive PDZ domains span residues 620–710 (VVEF…RRRK) and 705–796 (VVRR…LKVF). A disordered region spans residues 857–898 (ELGHSGGSSSFLHKPFSGSSSPVSPQACPSTSERSLNSFRSD). Residues 873 to 898 (SGSSSPVSPQACPSTSERSLNSFRSD) are compositionally biased toward polar residues. The residue at position 900 (S900) is a Phosphoserine. Residues 930–1121 (EVPLDKIDPE…RPKSAPSFRP (192 aa)) are disordered. The residue at position 984 (T984) is a Phosphothreonine. S1000 is modified (phosphoserine). T1011 bears the Phosphothreonine mark. Positions 1017 to 1030 (RRSDSIKFQHRLET) are enriched in basic and acidic residues. Position 1021 is a phosphoserine (S1021). Positions 1045–1055 (TSPPSAPPPSM) are enriched in pro residues. Residue T1183 is modified to Phosphothreonine. Disordered regions lie at residues 1204–1227 (VLPC…SVQH), 1243–1266 (YSEM…SSSN), and 1280–1343 (PRYP…KDRP). Position 1209 is a phosphoserine (S1209). Residues 1217 to 1227 (GSQSLSPSVQH) are compositionally biased toward polar residues. Positions 1252–1266 (SNSLPSSARLGSSSN) are enriched in low complexity. S1263 carries the post-translational modification Phosphoserine. Residues 1292 to 1324 (GSLSHSECSTPPRSPLNIDTLSSCSQPQTTAST) show a composition bias toward polar residues. Residue S1334 is modified to Phosphoserine. One can recognise a PDZ 3 domain in the interval 1350–1429 (HVKVQKGSEP…TITILAQYNP (80 aa)). Polar residues-rich tracts occupy residues 1434–1443 (LNSHSRSSSH), 1450–1460 (PHSTLQGSSAG), and 1483–1495 (AKQS…SVGD). Residues 1434–1501 (LNSHSRSSSH…SVGDTTKKTP (68 aa)) form a disordered region. In terms of domain architecture, PDZ 4 spans 1504–1585 (RIVFIKKSQL…SLRLKVQYRH (82 aa)). The region spanning 1596–1664 (GDSFYIRALY…PSKYVMDQEF (69 aa)) is the SH3 domain. S1669 bears the Phosphoserine mark. A Guanylate kinase-like domain is found at 1724-1907 (DSVSLAYQRV…ICTQILAMVS (184 aa)).

This sequence belongs to the MAGUK family. Interacts with MPP1. Interacts with CTNNB1 and with the third SH3 domain of SORBS3 to form a ternary complex. Interacts (via coiled-coil domain) with MARK3. Interacts (via PDZ domain 3) with STK3/MST2 and STK4/MST1. Interacts with SCRIB. Interacts with CTNB1. Interacts with SMO and (via PDZ4 or guanylate kinase-like domain) with KIF7. In terms of tissue distribution, brain (at protein level).

It localises to the cell junction. The protein localises to the cell membrane. The protein resides in the postsynaptic density. It is found in the cytoplasm. Its subcellular location is the cytoskeleton. It localises to the cilium basal body. Functionally, acts as a regulator of the Hippo signaling pathway. Negatively regulates the Hippo signaling pathway by mediating the interaction of MARK3 with STK3/4, bringing them together to promote MARK3-dependent hyperphosphorylation and inactivation of STK3 kinase activity toward LATS1. Positively regulates the Hippo signaling by mediating the interaction of SCRIB with STK4/MST1 and LATS1 which is important for the activation of the Hippo signaling pathway. Involved in regulating cell proliferation, maintenance of epithelial polarity, epithelial-mesenchymal transition (EMT), cell migration and invasion. Plays an important role in dendritic spine formation and synaptogenesis in cortical neurons; regulates synaptogenesis by enhancing the cell surface localization of N-cadherin. Acts as a positive regulator of hedgehog (Hh) signaling pathway. Plays a critical role in the early point of the SMO activity cycle by interacting with SMO at the ciliary base to induce the accumulation of KIF7 and GLI2 at the ciliary tip for GLI2 activation. This chain is Disks large homolog 5 (Dlg5), found in Mus musculus (Mouse).